Reading from the N-terminus, the 534-residue chain is MFS transporter fmqE (534 aa).

A run of 12 helical transmembrane segments spans residues 48-68 (LLLF…VCAS), 109-129 (LWTS…GFLA), 136-156 (WTAV…VFSS), 169-189 (GAVV…VAPI), 194-214 (ALLQ…LGIV), 228-248 (IVFG…FLVP), 326-346 (AIGV…GLNV), 349-369 (VFDI…LGWL), 379-399 (LWLW…ALGF), 407-427 (LAIA…TVGV), 447-467 (VAFI…PYMY), and 478-498 (TGFV…FLVP).

The protein belongs to the major facilitator superfamily. Sugar transporter (TC 2.A.1.1) family.

The protein localises to the cytoplasmic vesicle membrane. Its function is as follows. MFS transporter; part of the gene cluster that mediates the biosynthesis of the antitumor cytotoxic peptidyl alkaloids fumiquinazolines that confer a dual-usage capability to defend against phagocytes in the environment and animal hosts. Probably involved in fumiquinazolines metabolism and transport. This chain is MFS transporter fmqE, found in Aspergillus fumigatus (strain ATCC MYA-4609 / CBS 101355 / FGSC A1100 / Af293) (Neosartorya fumigata).